We begin with the raw amino-acid sequence, 422 residues long: uncharacterized protein (422 aa).

Phosphoserine is present on residues Ser124, Ser126, and Ser151. Residues Thr144–Lys166 form a disordered region. Lys250 participates in a covalent cross-link: Glycyl lysine isopeptide (Lys-Gly) (interchain with G-Cter in SUMO2). Disordered stretches follow at residues Ala251–Ser285 and Gly299–Ala324. Residues Glu271–Asn282 are compositionally biased toward acidic residues. Residues Ser280 and Ser306 each carry the phosphoserine modification. Low complexity predominate over residues Ala310–Ala324. Residue Ser351 is modified to Phosphoserine.

This is an uncharacterized protein from Homo sapiens (Human).